The following is a 189-amino-acid chain: GMP synthase [glutamine-hydrolyzing] subunit A (189 aa).

Residues 1-189 enclose the Glutamine amidotransferase type-1 domain; it reads MIVILNNGGQ…CKVCGFKFNE (189 aa). Catalysis depends on Cys76, which acts as the Nucleophile. Catalysis depends on residues His163 and Glu165.

As to quaternary structure, heterodimer composed of a glutamine amidotransferase subunit (A) and a GMP-binding subunit (B).

It catalyses the reaction XMP + L-glutamine + ATP + H2O = GMP + L-glutamate + AMP + diphosphate + 2 H(+). It functions in the pathway purine metabolism; GMP biosynthesis; GMP from XMP (L-Gln route): step 1/1. In terms of biological role, catalyzes the synthesis of GMP from XMP. The chain is GMP synthase [glutamine-hydrolyzing] subunit A from Methanococcus vannielii (strain ATCC 35089 / DSM 1224 / JCM 13029 / OCM 148 / SB).